A 159-amino-acid polypeptide reads, in one-letter code: Succinate dehydrogenase [ubiquinone] cytochrome b small subunit, mitochondrial (159 aa).

Residues 1-36 (MATLWRLSVLCGARGGGALVLRTSVVRPAHVSAFLQ) constitute a mitochondrion transit peptide. The Mitochondrial matrix portion of the chain corresponds to 37–63 (DRHTPGWCGVQHIHLSPSHQASSKAAS). A helical membrane pass occupies residues 64-85 (LHWTGERVVSVLLLGLLPAAYL). Residues 86 to 90 (NPCSA) are Mitochondrial intermembrane-facing. The helical transmembrane segment at 91 to 111 (MDYSLAAALTLHGHWGIGQVV) threads the bilayer. Histidine 102 contributes to the heme b binding site. Over 112 to 120 (TDYVRGDAL) the chain is Mitochondrial matrix. A ubiquinone is bound at residue tyrosine 114. Residues 121 to 142 (QKVAKAGLLALSAFTFAGLCYF) form a helical membrane-spanning segment. Over 143–159 (NYHDVGICKAVAMLWKL) the chain is Mitochondrial intermembrane.

It belongs to the CybS family. As to quaternary structure, component of complex II composed of four subunits: the flavoprotein (FP) SDHA, iron-sulfur protein (IP) SDHB, and a cytochrome b560 composed of SDHC and SDHD.

The protein resides in the mitochondrion inner membrane. Its pathway is carbohydrate metabolism; tricarboxylic acid cycle. Its function is as follows. Membrane-anchoring subunit of succinate dehydrogenase (SDH) that is involved in complex II of the mitochondrial electron transport chain and is responsible for transferring electrons from succinate to ubiquinone (coenzyme Q). SDH also oxidizes malate to the non-canonical enol form of oxaloacetate, enol-oxaloacetate. Enol-oxaloacetate, which is a potent inhibitor of the succinate dehydrogenase activity, is further isomerized into keto-oxaloacetate. The protein is Succinate dehydrogenase [ubiquinone] cytochrome b small subunit, mitochondrial (SDHD) of Sus scrofa (Pig).